The chain runs to 1136 residues: Tyrosine-protein kinase receptor Tie-1 (1136 aa).

Residues 1–23 form the signal peptide; the sequence is MVWLEPPLLLPIFFLASHVGAAV. At 24–757 the chain is on the extracellular side; sequence DLTLLADLRL…IHAAEEGLDQ (734 aa). Residues 43 to 106 form the Ig-like C2-type 1 domain; that stretch reads CVSGEAGAGR…PSDLVGVFSC (64 aa). 2 N-linked (GlcNAc...) asparagine glycosylation sites follow: Asn84 and Asn159. 3 EGF-like domains span residues 212 to 254, 256 to 301, and 303 to 343; these read GCEA…TRCE, ACRE…SQCQ, and ACAP…MHCE. 3 disulfide bridges follow: Cys226-Cys235, Cys229-Cys242, and Cys244-Cys253. Cystine bridges form between Cys317-Cys325, Cys319-Cys331, and Cys333-Cys342. Residues 370–424 form the Ig-like C2-type 2 domain; that stretch reads CAAAGNPFPVRGSMELRKPDGTVLLSTKAIVEPDRTTAEFEVPRLALGDSGLWEC. Fibronectin type-III domains follow at residues 444 to 543, 546 to 640, and 644 to 737; these read PPVP…CPEP, KPWL…LPPS, and APRH…TLGN. Asn501, Asn594, and Asn707 each carry an N-linked (GlcNAc...) asparagine glycan. A helical transmembrane segment spans residues 758-782; the sequence is QLVLAVVGSVSATCLTILAALLTLA. Residues 783 to 1136 are Cytoplasmic-facing; it reads CIRKSCLHRR…AGIDATAEEA (354 aa). In terms of domain architecture, Protein kinase spans 837 to 1116; the sequence is ITFEDLIGEG…RMLEARKAYV (280 aa). ATP contacts are provided by residues 843–851 and Lys868; that span reads IGEGNFGQV. Asp977 serves as the catalytic Proton acceptor. Phosphotyrosine; by autocatalysis is present on Tyr1005.

This sequence belongs to the protein kinase superfamily. Tyr protein kinase family. Tie subfamily. As to quaternary structure, heterodimer with TEK/TIE2. Interacts with SVEP1 (via C-terminus). In terms of processing, phosphorylated on tyrosine residues in response to ANGPT1, most likely by TEK/TIE2. As to expression, specifically expressed in developing vascular endothelial cells.

The protein localises to the cell membrane. It catalyses the reaction L-tyrosyl-[protein] + ATP = O-phospho-L-tyrosyl-[protein] + ADP + H(+). Functionally, transmembrane tyrosine-protein kinase that may modulate TEK/TIE2 activity and contribute to the regulation of angiogenesis. The protein is Tyrosine-protein kinase receptor Tie-1 (TIE1) of Bos taurus (Bovine).